Reading from the N-terminus, the 122-residue chain is Large ribosomal subunit protein uL14 (122 aa).

The protein belongs to the universal ribosomal protein uL14 family. In terms of assembly, part of the 50S ribosomal subunit. Forms a cluster with proteins L3 and L19. In the 70S ribosome, L14 and L19 interact and together make contacts with the 16S rRNA in bridges B5 and B8.

In terms of biological role, binds to 23S rRNA. Forms part of two intersubunit bridges in the 70S ribosome. This Burkholderia lata (strain ATCC 17760 / DSM 23089 / LMG 22485 / NCIMB 9086 / R18194 / 383) protein is Large ribosomal subunit protein uL14.